Reading from the N-terminus, the 101-residue chain is Small ribosomal subunit protein uS14 (101 aa).

The disordered stretch occupies residues 51–70 (LPRDSSPSRQRNRCRQTGRP).

Belongs to the universal ribosomal protein uS14 family. As to quaternary structure, part of the 30S ribosomal subunit. Contacts proteins S3 and S10.

Its function is as follows. Binds 16S rRNA, required for the assembly of 30S particles and may also be responsible for determining the conformation of the 16S rRNA at the A site. The chain is Small ribosomal subunit protein uS14 from Salmonella arizonae (strain ATCC BAA-731 / CDC346-86 / RSK2980).